The following is a 233-amino-acid chain: MQLGVNVDHVATLRNLRGTTYPSIVELANIAVEHGADFITVHLREDRRHVRDDDLYALKKHVNVPINLEMAATEEMLAIAKELSPEFVCLVPEKREEVTTESGLDTKLLYDTRLFIISELQRHGIKVTLFLDPSEEDIACAKRMNVDKIELHVGAYCISRAPQELEMITRAAQLVHEAGMICHAGHGIDYECAAAISKVKHITAINVGHFLVCEAITQGMGNAVRKMKDIITS.

Asn6 is a binding site for 3-amino-2-oxopropyl phosphate. 8-9 (DH) lines the 1-deoxy-D-xylulose 5-phosphate pocket. A 3-amino-2-oxopropyl phosphate-binding site is contributed by Arg17. Residue His42 is the Proton acceptor of the active site. The 1-deoxy-D-xylulose 5-phosphate site is built by Arg44 and His49. Glu69 (proton acceptor) is an active-site residue. Residue Thr99 participates in 1-deoxy-D-xylulose 5-phosphate binding. His186 functions as the Proton donor in the catalytic mechanism. Residues Gly187 and 208-209 (GH) contribute to the 3-amino-2-oxopropyl phosphate site.

This sequence belongs to the PNP synthase family. As to quaternary structure, homooctamer; tetramer of dimers.

It localises to the cytoplasm. It catalyses the reaction 3-amino-2-oxopropyl phosphate + 1-deoxy-D-xylulose 5-phosphate = pyridoxine 5'-phosphate + phosphate + 2 H2O + H(+). It functions in the pathway cofactor biosynthesis; pyridoxine 5'-phosphate biosynthesis; pyridoxine 5'-phosphate from D-erythrose 4-phosphate: step 5/5. Catalyzes the complicated ring closure reaction between the two acyclic compounds 1-deoxy-D-xylulose-5-phosphate (DXP) and 3-amino-2-oxopropyl phosphate (1-amino-acetone-3-phosphate or AAP) to form pyridoxine 5'-phosphate (PNP) and inorganic phosphate. This Anaplasma phagocytophilum (strain HZ) protein is Pyridoxine 5'-phosphate synthase.